A 136-amino-acid chain; its full sequence is 6,7-dimethyl-8-ribityllumazine synthase (136 aa).

5-amino-6-(D-ribitylamino)uracil is bound by residues Phe-11, 43–45, and 67–69; these read SFD and AVI. 72–73 lines the (2S)-2-hydroxy-3-oxobutyl phosphate pocket; it reads ET. Residue His-75 is the Proton donor of the active site. Leu-100 contributes to the 5-amino-6-(D-ribitylamino)uracil binding site. A (2S)-2-hydroxy-3-oxobutyl phosphate-binding site is contributed by Arg-115.

This sequence belongs to the DMRL synthase family.

The catalysed reaction is (2S)-2-hydroxy-3-oxobutyl phosphate + 5-amino-6-(D-ribitylamino)uracil = 6,7-dimethyl-8-(1-D-ribityl)lumazine + phosphate + 2 H2O + H(+). It functions in the pathway cofactor biosynthesis; riboflavin biosynthesis; riboflavin from 2-hydroxy-3-oxobutyl phosphate and 5-amino-6-(D-ribitylamino)uracil: step 1/2. Functionally, catalyzes the formation of 6,7-dimethyl-8-ribityllumazine by condensation of 5-amino-6-(D-ribitylamino)uracil with 3,4-dihydroxy-2-butanone 4-phosphate. This is the penultimate step in the biosynthesis of riboflavin. The protein is 6,7-dimethyl-8-ribityllumazine synthase of Picrophilus torridus (strain ATCC 700027 / DSM 9790 / JCM 10055 / NBRC 100828 / KAW 2/3).